A 537-amino-acid chain; its full sequence is Periplasmic murein peptide-binding protein MppA (537 aa).

The first 22 residues, 1–22 (MKHSVSVTCCALLVSSISLSYA), serve as a signal peptide directing secretion. 9 residues coordinate L-alanyl-gamma-D-glutamyl-meso-2,6-diaminopimelate: lysine 42, valine 54, leucine 56, glutamine 289, arginine 424, serine 435, valine 437, aspartate 439, and threonine 506.

The protein belongs to the bacterial solute-binding protein 5 family. The complex is composed of two ATP-binding proteins (OppD and OppF), two transmembrane proteins (OppB and OppC) and a solute-binding protein (MppA).

It localises to the periplasm. In terms of biological role, part of the ABC transporter complex MppA-OppBCDF involved in the uptake of the cell wall murein tripeptide L-alanyl-gamma-D-glutamyl-meso-diaminopimelate. Is involved in the recycling of cell wall peptides. Binds the cell wall peptide L-Ala-D-Gly-gamma-meso-diaminopimelic acid. Can also transport ordinary alpha-linked tripeptides such as Pro-Phe-Lys, but with much lower efficiency than OppA. Cannot bind typical tripeptides such as Lys-Glu-Lys, Lys-Lys-Lys or Ala-Ala-Ala. This is Periplasmic murein peptide-binding protein MppA from Escherichia coli (strain K12).